Consider the following 449-residue polypeptide: Glutamyl-tRNA(Gln) amidotransferase subunit A (449 aa).

Residues Lys51 and Ser126 each act as charge relay system in the active site. The segment at 103 to 128 is disordered; the sequence is STTESSAHGKTLNPVDSSRVPGGSSG. A compositionally biased stretch (low complexity) spans 119 to 128; the sequence is SSRVPGGSSG. The active-site Acyl-ester intermediate is the Ser150.

This sequence belongs to the amidase family. GatA subfamily. Heterotrimer of A, B and C subunits.

It carries out the reaction L-glutamyl-tRNA(Gln) + L-glutamine + ATP + H2O = L-glutaminyl-tRNA(Gln) + L-glutamate + ADP + phosphate + H(+). In terms of biological role, allows the formation of correctly charged Gln-tRNA(Gln) through the transamidation of misacylated Glu-tRNA(Gln) in organisms which lack glutaminyl-tRNA synthetase. The reaction takes place in the presence of glutamine and ATP through an activated gamma-phospho-Glu-tRNA(Gln). The protein is Glutamyl-tRNA(Gln) amidotransferase subunit A of Wolinella succinogenes (strain ATCC 29543 / DSM 1740 / CCUG 13145 / JCM 31913 / LMG 7466 / NCTC 11488 / FDC 602W) (Vibrio succinogenes).